The sequence spans 98 residues: Large ribosomal subunit protein uL23 (98 aa).

The protein belongs to the universal ribosomal protein uL23 family. In terms of assembly, part of the 50S ribosomal subunit. Contacts protein L29, and trigger factor when it is bound to the ribosome.

Functionally, one of the early assembly proteins it binds 23S rRNA. One of the proteins that surrounds the polypeptide exit tunnel on the outside of the ribosome. Forms the main docking site for trigger factor binding to the ribosome. The chain is Large ribosomal subunit protein uL23 from Clostridium acetobutylicum (strain ATCC 824 / DSM 792 / JCM 1419 / IAM 19013 / LMG 5710 / NBRC 13948 / NRRL B-527 / VKM B-1787 / 2291 / W).